A 92-amino-acid chain; its full sequence is Defensin alpha 4 (92 aa).

The signal sequence occupies residues 1–19; sequence MKTLVLLSALVLLAFQVQA. Positions 20-58 are excised as a propeptide; that stretch reads DPIQNTDEETKTEEQPGEEDQAVSISFGGQEGSALHEKS. Positions 23–42 are disordered; sequence QNTDEETKTEEQPGEEDQAV. Cystine bridges form between cysteine 64-cysteine 89, cysteine 66-cysteine 81, and cysteine 71-cysteine 88.

It belongs to the alpha-defensin family. As to expression, paneth cells of the small bowel.

Its subcellular location is the secreted. The protein resides in the cytoplasmic vesicle. It localises to the secretory vesicle. Its function is as follows. Host-defense peptide that has antimicrobial activity. Exhibits activity against Gram-negative E.coli (in vitro). Probably contributes to the antimicrobial barrier function of the small bowel mucosa. The protein is Defensin alpha 4 of Mus musculus (Mouse).